The sequence spans 398 residues: MTGQRATPQPTLDDLPLRDDLRGKSPYGAPQLAVPVRLNTNENPHPPSRALVDDVVRSVARAAADLHRYPDRDAVQLRSDLARYLTAQTGVQLGVENLWAANGSNEILQQLLQAFGGPGRSAIGFVPSYSMHPIISDGTRTEWLQAARADDFSLDVDAAVAAVTERTPDVVFVASPNNPSGQSVSLSGLRRLLDAAPGIVIVDEAYGEFSSQPSAVQLVGEYPTKLVVTRTMSKAFAFAGGRLGYLIATPAVIEAMLLVRLPYHLSSVTQAAARAALRHADDTLGSVAALIAERERVSTALTGMGFRVIPSDANFVLFGEFTDAPASWQRYLDAGVLIRDVGIPGYLRATTGLAEENDAFLRASAQLAATELAPVNVGAIANAAEPRAAGRDRVLGAP.

Over residues 1–10 (MTGQRATPQP) the composition is skewed to polar residues. Residues 1 to 30 (MTGQRATPQPTLDDLPLRDDLRGKSPYGAP) form a disordered region. K234 carries the N6-(pyridoxal phosphate)lysine modification.

The protein belongs to the class-II pyridoxal-phosphate-dependent aminotransferase family. Histidinol-phosphate aminotransferase subfamily. Homodimer. The cofactor is pyridoxal 5'-phosphate.

It carries out the reaction L-histidinol phosphate + 2-oxoglutarate = 3-(imidazol-4-yl)-2-oxopropyl phosphate + L-glutamate. It participates in amino-acid biosynthesis; L-histidine biosynthesis; L-histidine from 5-phospho-alpha-D-ribose 1-diphosphate: step 7/9. The protein is Histidinol-phosphate aminotransferase of Mycolicibacterium paratuberculosis (strain ATCC BAA-968 / K-10) (Mycobacterium paratuberculosis).